The following is a 448-amino-acid chain: tRNA modification GTPase MnmE (448 aa).

(6S)-5-formyl-5,6,7,8-tetrahydrofolate-binding residues include Arg-24, Glu-81, and Lys-120. The 158-residue stretch at Gly-216–Gly-373 folds into the TrmE-type G domain. Asn-226 lines the K(+) pocket. Residues Asn-226–Ser-231, Thr-245–Thr-251, and Asp-270–Gly-273 contribute to the GTP site. Residue Ser-230 coordinates Mg(2+). Residues Thr-245, Ile-247, and Thr-250 each contribute to the K(+) site. Thr-251 lines the Mg(2+) pocket. Lys-448 provides a ligand contact to (6S)-5-formyl-5,6,7,8-tetrahydrofolate.

The protein belongs to the TRAFAC class TrmE-Era-EngA-EngB-Septin-like GTPase superfamily. TrmE GTPase family. Homodimer. Heterotetramer of two MnmE and two MnmG subunits. K(+) is required as a cofactor.

The protein localises to the cytoplasm. In terms of biological role, exhibits a very high intrinsic GTPase hydrolysis rate. Involved in the addition of a carboxymethylaminomethyl (cmnm) group at the wobble position (U34) of certain tRNAs, forming tRNA-cmnm(5)s(2)U34. This chain is tRNA modification GTPase MnmE, found in Neisseria gonorrhoeae (strain ATCC 700825 / FA 1090).